The chain runs to 131 residues: Small ribosomal subunit protein eS8 (131 aa).

The tract at residues 15-36 (PSGGKKGRVRKTKKKALGGGPP) is disordered. The segment covering 17–30 (GGKKGRVRKTKKKA) has biased composition (basic residues).

The protein belongs to the eukaryotic ribosomal protein eS8 family. In terms of assembly, part of the 30S ribosomal subunit.

The chain is Small ribosomal subunit protein eS8 from Pyrobaculum calidifontis (strain DSM 21063 / JCM 11548 / VA1).